We begin with the raw amino-acid sequence, 206 residues long: 3-demethoxyubiquinol 3-hydroxylase (206 aa).

Residues Glu-55, Glu-85, His-88, Glu-137, Glu-169, and His-172 each contribute to the Fe cation site.

The protein belongs to the COQ7 family. Fe cation serves as cofactor.

It localises to the cell membrane. The enzyme catalyses a 5-methoxy-2-methyl-3-(all-trans-polyprenyl)benzene-1,4-diol + AH2 + O2 = a 3-demethylubiquinol + A + H2O. Its pathway is cofactor biosynthesis; ubiquinone biosynthesis. Functionally, catalyzes the hydroxylation of 2-nonaprenyl-3-methyl-6-methoxy-1,4-benzoquinol during ubiquinone biosynthesis. This chain is 3-demethoxyubiquinol 3-hydroxylase, found in Chromobacterium violaceum (strain ATCC 12472 / DSM 30191 / JCM 1249 / CCUG 213 / NBRC 12614 / NCIMB 9131 / NCTC 9757 / MK).